Here is a 122-residue protein sequence, read N- to C-terminus: Large ribosomal subunit protein uL22 (122 aa).

The interval 103–122 (VEGKEMKSSKSHKKNQAEGK) is disordered.

Belongs to the universal ribosomal protein uL22 family. Part of the 50S ribosomal subunit.

In terms of biological role, this protein binds specifically to 23S rRNA; its binding is stimulated by other ribosomal proteins, e.g. L4, L17, and L20. It is important during the early stages of 50S assembly. It makes multiple contacts with different domains of the 23S rRNA in the assembled 50S subunit and ribosome. Functionally, the globular domain of the protein is located near the polypeptide exit tunnel on the outside of the subunit, while an extended beta-hairpin is found that lines the wall of the exit tunnel in the center of the 70S ribosome. The polypeptide is Large ribosomal subunit protein uL22 (Helicobacter pylori (strain P12)).